A 58-amino-acid polypeptide reads, in one-letter code: uncharacterized protein (58 aa).

This is an uncharacterized protein from Treponema pallidum (strain Nichols).